The following is a 114-amino-acid chain: Phosphoribosyl-ATP pyrophosphatase (114 aa).

It belongs to the PRA-PH family.

Its subcellular location is the cytoplasm. It carries out the reaction 1-(5-phospho-beta-D-ribosyl)-ATP + H2O = 1-(5-phospho-beta-D-ribosyl)-5'-AMP + diphosphate + H(+). It functions in the pathway amino-acid biosynthesis; L-histidine biosynthesis; L-histidine from 5-phospho-alpha-D-ribose 1-diphosphate: step 2/9. This Leuconostoc mesenteroides subsp. mesenteroides (strain ATCC 8293 / DSM 20343 / BCRC 11652 / CCM 1803 / JCM 6124 / NCDO 523 / NBRC 100496 / NCIMB 8023 / NCTC 12954 / NRRL B-1118 / 37Y) protein is Phosphoribosyl-ATP pyrophosphatase.